The following is a 227-amino-acid chain: 2,3-bisphosphoglycerate-dependent phosphoglycerate mutase (227 aa).

Substrate contacts are provided by residues 7–14 (RHGFSEWN), 20–21 (TG), arginine 59, 86–89 (ERHY), lysine 97, 113–114 (RR), and 182–183 (GN). The Tele-phosphohistidine intermediate role is filled by histidine 8. Glutamate 86 (proton donor/acceptor) is an active-site residue.

This sequence belongs to the phosphoglycerate mutase family. BPG-dependent PGAM subfamily. Homodimer.

It catalyses the reaction (2R)-2-phosphoglycerate = (2R)-3-phosphoglycerate. It participates in carbohydrate degradation; glycolysis; pyruvate from D-glyceraldehyde 3-phosphate: step 3/5. In terms of biological role, catalyzes the interconversion of 2-phosphoglycerate and 3-phosphoglycerate. This Pasteurella multocida (strain Pm70) protein is 2,3-bisphosphoglycerate-dependent phosphoglycerate mutase.